The chain runs to 312 residues: Malate dehydrogenase (312 aa).

Residues 7–13 and Asp-34 each bind NAD(+); that span reads GAAGGIG. Substrate-binding residues include Arg-81 and Arg-87. NAD(+) is bound by residues Asn-94 and 117 to 119; that span reads ITN. The substrate site is built by Asn-119 and Arg-153. The Proton acceptor role is filled by His-177. Met-227 provides a ligand contact to NAD(+).

The protein belongs to the LDH/MDH superfamily. MDH type 1 family. Homodimer.

It carries out the reaction (S)-malate + NAD(+) = oxaloacetate + NADH + H(+). Catalyzes the reversible oxidation of malate to oxaloacetate. This is Malate dehydrogenase from Moritella marina (Vibrio marinus).